The primary structure comprises 455 residues: Golgi pH regulator (455 aa).

Transmembrane regions (helical) follow at residues 5 to 25, 46 to 66, 79 to 99, 114 to 134, and 150 to 170; these read IDSS…WLFF, VTFA…LGVL, LCVI…YFIV, CLLW…FPIL, and VGVI…VNCP. N-linked (GlcNAc...) asparagine glycans are attached at residues Asn180 and Asn243. The next 4 membrane-spanning stretches (helical) occupy residues 290–310, 343–363, 378–398, and 425–445; these read GYFF…NIVL, ISFI…LITL, VIVL…VLLI, and WFDV…YLAH.

The protein belongs to the Golgi pH regulator (TC 1.A.38) family. As to quaternary structure, homotrimer. Interacts with RABL3; the interaction stabilizes GPR89B.

The protein resides in the golgi apparatus membrane. It catalyses the reaction iodide(out) = iodide(in). The enzyme catalyses chloride(in) = chloride(out). The catalysed reaction is bromide(in) = bromide(out). It carries out the reaction fluoride(in) = fluoride(out). Voltage-gated channel that enables the transfer of anions such as iodide, chloride, bromide and fluoride which may function in counter-ion conductance and participates in Golgi acidification. Plays a role in lymphocyte development, probably by acting as a RABL3 effector in hematopoietic cells. The protein is Golgi pH regulator of Cricetulus griseus (Chinese hamster).